A 580-amino-acid polypeptide reads, in one-letter code: MSFDQVIADALQALRSRFGADILSEQATGEGFPVLWLAAPAWEAAHRFLREEISAPFPLLADLWAIDESQRQHRAGQPASRLTLCSHLVSLERNADLRLKLATDGRAPSVAGVYANADWYEREAHDMFGLDFGRETRRLLMPPTWEGHPLLKTHYARATEKPPFVLTDRLFEAEERATITDPDLLGLPGLRDGEELMVLNFGPHHPSTHGVFRILLGLDGEEVVWAWPDIGYHHRGVEKMAERQTWHGFIPYCDRVDYLGGVISELPYLLAVERLCGIAVPPRAQMIRVMLCEFYRIMNHLLFYGTMAQDVGAMSPVFYMFTDREKGHEILNAITGARMHPAFFRIGGVAMDLPRGWDAMVRDFLDWMPGRLDEYERMVLRSELFRARTVGVGAYDTDTALTWGTTGPGLRATGCNWDLRKQRPYCGYEQFDFEVPLGQRGDIFDRTRVRADEMRESLKIIRQCLENMPEGAVKADHPLTTPPPRGAMQTDIETLIAHFLQSSWGTVVPAGEATGQIEGHRGLTQYAIVSDGGTQSYRTRIRTPSFAHLQMIPEIVPGMTVADLVAHIASIDFVMSDVDR.

Residues 1–171 (MSFDQVIADA…PPFVLTDRLF (171 aa)) are NADH dehydrogenase I subunit C. Residues 195–580 (ELMVLNFGPH…IDFVMSDVDR (386 aa)) are NADH dehydrogenase I subunit D.

This sequence in the N-terminal section; belongs to the complex I 30 kDa subunit family. In the C-terminal section; belongs to the complex I 49 kDa subunit family. In terms of assembly, NDH-1 is composed of 13 different subunits. Subunits NuoB, CD, E, F, and G constitute the peripheral sector of the complex.

Its subcellular location is the cell inner membrane. It catalyses the reaction a quinone + NADH + 5 H(+)(in) = a quinol + NAD(+) + 4 H(+)(out). In terms of biological role, NDH-1 shuttles electrons from NADH, via FMN and iron-sulfur (Fe-S) centers, to quinones in the respiratory chain. The immediate electron acceptor for the enzyme in this species is believed to be ubiquinone. Couples the redox reaction to proton translocation (for every two electrons transferred, four hydrogen ions are translocated across the cytoplasmic membrane), and thus conserves the redox energy in a proton gradient. The protein is NADH-quinone oxidoreductase subunit C/D of Cereibacter sphaeroides (strain ATCC 17025 / ATH 2.4.3) (Rhodobacter sphaeroides).